The sequence spans 307 residues: Ribosomal RNA small subunit methyltransferase H (307 aa).

Residues 38–40, aspartate 58, phenylalanine 82, aspartate 99, and glutamine 106 contribute to the S-adenosyl-L-methionine site; that span reads GGH.

This sequence belongs to the methyltransferase superfamily. RsmH family.

Its subcellular location is the cytoplasm. The catalysed reaction is cytidine(1402) in 16S rRNA + S-adenosyl-L-methionine = N(4)-methylcytidine(1402) in 16S rRNA + S-adenosyl-L-homocysteine + H(+). Its function is as follows. Specifically methylates the N4 position of cytidine in position 1402 (C1402) of 16S rRNA. In Variovorax paradoxus (strain S110), this protein is Ribosomal RNA small subunit methyltransferase H.